Reading from the N-terminus, the 459-residue chain is Serine permease SerP1 (459 aa).

12 consecutive transmembrane segments (helical) span residues 19–39 (IQLIAIAGTIGTGLFLGAGKT), 42–62 (MTGPSVIFAYILIGIAMFFFL), 97–117 (SYWLVIVFVCISELTAIGTYI), 119–139 (FWLPHLPLWLIEIVMLALLFG), 153–173 (FWFAMIKVAAILGMIVTAIIL), 212–232 (FVGALQMVMFAFTSMEFIGMT), 254–274 (ILLFYVGALLAIMAIFNWHYI), 281–301 (FVIVFQLIGIKWAAALINFVV), 341–361 (AGIPINALYMATALSLLAPVL), 370–390 (AFNFAASCTTNLFLVVYFITL), 412–432 (PTIAVPFIAIIFAIVFASLFF), and 436–456 (TFYPALGAIVWTLIFGLYSHF).

The protein belongs to the amino acid-polyamine-organocation (APC) superfamily. Amino acid transporter (AAT) (TC 2.A.3.1) family.

It is found in the cell membrane. Transports L-serine, L-threonine and L-cysteine with high affinity. Stereoselective, with a strong preference for L-serine. Is the main L-serine transporter and is responsible for optimal growth in media containing free amino acids as the sole source of amino acids. Is also the main transporter for L-threonine. This is Serine permease SerP1 from Lactococcus lactis subsp. cremoris (strain MG1363).